Reading from the N-terminus, the 579-residue chain is Adipocyte plasma membrane-associated protein Hemomucin (579 aa).

The Cytoplasmic segment spans residues 1 to 6; the sequence is MGLLYA. The chain crosses the membrane as a helical span at residues 7 to 29; it reads LRVRIMNFMIFFLLIILMPGLPP. Residues 30 to 579 are Extracellular-facing; that stretch reads RTTFPFKDYI…INKQGVNVEL (550 aa). 2 N-linked (GlcNAc...) asparagine glycosylation sites follow: asparagine 213 and asparagine 217. A disordered region spans residues 427-579; sequence GLEASIGVPP…INKQGVNVEL (153 aa). Over residues 435-529 the composition is skewed to low complexity; it reads PPSKATPKPK…PKPTTTTTPT (95 aa).

The protein belongs to the strictosidine synthase family. Interacts with sturkopf. O-glycosylated. Glycosylated in the ovary of 4 day old females. In terms of processing, phosphorylated. As to expression, detected in ovaries (at protein level). In larvae, detected in the fat body, salivary glands, imaginal disks and gut (at protein level). In adults, expressed in the cardia, and in regions of the ventriculus including the area posterior to the cardia. In females also expressed in follicle cells.

It is found in the cell membrane. Transmembrane mucin that may be involved in cellular adhesion and the innate immune response. Membrane-tethered mucins are involved in many cell surface functions and form a physical barrier around cells to regulate cell-cell and/or cell-substrate interactions, and protect against pathogens or harmful extracellular conditions. This mucin likely acts in hemocyte adhesion as it is released from hemocytes during coagulation and is also able to bind lipophorin particles which form part of the hemocyte coagulogen. Able to induce expression of the antibacterial proteins in the presence of GalNAc-specific lectins and so probably also functions in the innate immune response. This is Adipocyte plasma membrane-associated protein Hemomucin from Drosophila melanogaster (Fruit fly).